The sequence spans 751 residues: Probable alpha-galactosidase C (751 aa).

An N-terminal signal peptide occupies residues 1–27 (MFGSPKRAALAAASLLAVFGNGPSVMA). N49, N57, N162, N186, N194, N366, N433, N452, and N500 each carry an N-linked (GlcNAc...) asparagine glycan. D510 (nucleophile) is an active-site residue. Residue D572 is the Proton donor of the active site. N720 carries an N-linked (GlcNAc...) asparagine glycan.

This sequence belongs to the glycosyl hydrolase 36 family. Homotetramer. Requires Mg(2+) as cofactor. It depends on NAD(+) as a cofactor.

The protein resides in the secreted. It carries out the reaction Hydrolysis of terminal, non-reducing alpha-D-galactose residues in alpha-D-galactosides, including galactose oligosaccharides, galactomannans and galactolipids.. Functionally, hydrolyzes a variety of simple alpha-D-galactoside as well as more complex molecules such as oligosaccharides and polysaccharides. The protein is Probable alpha-galactosidase C (aglC) of Aspergillus oryzae (strain ATCC 42149 / RIB 40) (Yellow koji mold).